Here is a 356-residue protein sequence, read N- to C-terminus: MSWQNNLRSVSPYIAGEQAELTDMIKLNTNENPYPPSLQVQKVIEDFKSDNLRLYPSTDAKVLRKALATYHHLNTDQVFIGNGSDEVLSLSFLTFFNSEKPLLMPDISYSFYPIYCGLYHIPYQKIPLADDFSLSVNSYFQENGGIVIANPNAPTGMAISLQEIEEILQNNQDSIVLIDEAYIDFGGESCLPLLEKFDNLVVVQTFFKSRSLAGIRLGVAFGSAEAIAHLYDMKNSFNSYPIDSLAQKIGEASLNDETYFQKSVSKIITTRENFKKELIKLGFQVTDSKTNFVFVHHPKVDATTLFKALYEAKIIVRHWNQARISDWLRITIGTDREMNTVIQFLKEYLKNKEKSY.

Lys208 bears the N6-(pyridoxal phosphate)lysine mark.

Belongs to the class-II pyridoxal-phosphate-dependent aminotransferase family. Histidinol-phosphate aminotransferase subfamily. As to quaternary structure, homodimer. Pyridoxal 5'-phosphate serves as cofactor.

It carries out the reaction L-histidinol phosphate + 2-oxoglutarate = 3-(imidazol-4-yl)-2-oxopropyl phosphate + L-glutamate. The protein operates within amino-acid biosynthesis; L-histidine biosynthesis; L-histidine from 5-phospho-alpha-D-ribose 1-diphosphate: step 7/9. The protein is Histidinol-phosphate aminotransferase of Lactococcus lactis subsp. cremoris (strain MG1363).